A 1487-amino-acid chain; its full sequence is METSQIRNGFNKVEVDVVGPLKDLLVRVMKNINTPFKILNETFKINYCDQQETKTKSSFYIQTLDANDKSSLELTKSAIKNIQMQQQQQQQQQQQQQQQQHHDIFQFTQPSSSHNHSNHHHHHHQQQLQQQQQQQLQQQMKTPKLLFFIVMSVGVGKSYIKNIKEEAGTIPILEWFTNYIRSWEEVFKLTSNQVTSHIKRQLLTKACTTGNINLLDEILLSGISKEQIKETQTIGHGIILKSLIVNNLDSIVVSGSMSLLGAVIDNDNDKKGSSLILSKLNLNLFPKSIITACFNLAELDLSYNNIKEIPKEICQLKHLKILNMNNNQLDDLPLELANLTNLKYLAVQDNPLNKFPHHIIEQGTKRTLVFLKNIIEGKKSETWNKVKLMFVGQEGVGKSSLCKALMGSRRRSSSSFAAELQKSGDTISTEGVKIQSIKGKKIDFYAWDFGGQQVFYPTHQFFLTNQALYLLVFKLTDPNFAERVNYWTLQIKANSGLSVPMIFLVGTHCDACTPEQLSSAEQILKENFVKYSRIRQNAISFVSCTNGTGIKELKKILTNEAEKSNLIKSNIPGSYLILEQRLTDRGANSSRILINQNNINQNNNNNNNNNNHNNCNNNENCTTTAATAGTTTMTSTTTTTTNYSNENILNTSSNSLIALFTRSNSNSNLSNNYQKPLVNQKYIDYNDFERECKLSHLAQEEIQGATEFLHNMGIILHYDTPILRSLVVLDPQWLADVMSSLITFSHNWIKNGILNHSELVSIWSGKYDQSIWPSLLKLLEKFEVSYELPNEFPSRSLIPSLLPEEPIDRIQEIKEKLWIPLPEAIESKRVQIFGCQYNFDFMPLGFFPRLLLRILLIKGIDIKTYWANGILLDILTTEDIKIQKLNHKKHSILPNNSSSTSSSTSSSTSSSTSSSSSSSTSSSSTSTTTTTVQIQSSPFGNSTTIVNKLTNIDNNNNNNNNNNNNNNNNNNINNNNNNNNNNNNNNNNNNNNNNNNNNNNNNNNNNIKNIINNFENQNNLNNIITNNFGGKFEIIKKNDFESPLSSKKPKHQVLVTFKNQKSFESKDKDTYKLNVEIRSFNVSNNNDKDFLASLFFQQLLSTIDTLLSGSYGGLKVTRLIPCIHCIEKDPHSEPHLFDINSCISQLLLGKSQLVCGKDSTTPVRIDYIAPDLSIKKIPILLEDQVVCEEQIGVGGFGLVHKGKLILQDKSLVVAIKSYIVGNSSASDIIRKFQEFHHEMYIMSSLNHLNIVKLFGSMQNPPRMVMEFAPHGDLYHFLEKKKNIKWSFKVRLMLDIAKGIEYLQNQNPPIVHRDLRSPNIFLFSLDENAPVCAKVADFGLSQQSLYSVSGLLGNFQWMAPETIGAEESYTEKIDTYSFSMILFTILTGECPFDEFTSFGKMEFIRKIREEDLRPTIPSDCPPTISNLIELCWSGDPKKRPHFSYIVKELTNFYYNLNLSPIPEQKSINDKSPHPDLISNGVPKLQIAK.

The segment at 108–134 (TQPSSSHNHSNHHHHHHQQQLQQQQQQ) is disordered. The span at 116–125 (HSNHHHHHHQ) shows a compositional bias: basic residues. LRR repeat units lie at residues 295–316 (NLAE…ICQL), 318–340 (HLKI…ANLT), and 341–362 (NLKY…IIEQ). Residues 379 to 564 (KSETWNKVKL…KILTNEAEKS (186 aa)) form the Roc domain. The interval 379-564 (KSETWNKVKL…KILTNEAEKS (186 aa)) is small GTPase-like. GTP contacts are provided by residues 392-399 (GQEGVGKS), 448-452 (DFGGQ), and 507-510 (THCD). One can recognise a COR domain in the interval 678–872 (VNQKYIDYND…KTYWANGILL (195 aa)). Residues 891–1007 (SILPNNSSST…NNNNNNNNNI (117 aa)) form a disordered region. The span at 897–931 (SSSTSSSTSSSTSSSTSSSSSSSTSSSSTSTTTTT) shows a compositional bias: low complexity. Positions 932–950 (VQIQSSPFGNSTTIVNKLT) are enriched in polar residues. Low complexity predominate over residues 951 to 1007 (NIDNNNNNNNNNNNNNNNNNNINNNNNNNNNNNNNNNNNNNNNNNNNNNNNNNNNNI). In terms of domain architecture, Protein kinase spans 1185-1452 (VVCEEQIGVG…YIVKELTNFY (268 aa)). Residues 1191 to 1199 (IGVGGFGLV) and K1216 contribute to the ATP site. D1313 serves as the catalytic Proton acceptor. The segment at 1464–1487 (KSINDKSPHPDLISNGVPKLQIAK) is disordered.

This sequence belongs to the protein kinase superfamily. TKL Ser/Thr protein kinase family. ROCO subfamily.

It carries out the reaction L-seryl-[protein] + ATP = O-phospho-L-seryl-[protein] + ADP + H(+). The catalysed reaction is L-threonyl-[protein] + ATP = O-phospho-L-threonyl-[protein] + ADP + H(+). The polypeptide is Probable serine/threonine-protein kinase roco11 (roco11) (Dictyostelium discoideum (Social amoeba)).